The sequence spans 471 residues: Putative multidrug resistance protein MdtD (471 aa).

Over 1–11 (MTDLPDSTRWQ) the chain is Periplasmic. The chain crosses the membrane as a helical span at residues 12-32 (LWIVAFGFFMQSLDTTIVNTA). The Cytoplasmic portion of the chain corresponds to 33–48 (LPSMAQSLGESPLHMH). The chain crosses the membrane as a helical span at residues 49 to 69 (MVIVSYVLTVAVMLPASGWLA). Over 70-76 (DKVGVRN) the chain is Periplasmic. A helical transmembrane segment spans residues 77-97 (IFFTAIVLFTLGSLFCALSGT). Over 98–101 (LNEL) the chain is Cytoplasmic. The helical transmembrane segment at 102 to 124 (LLARALQGVGGAMMVPVGRLTVM) threads the bilayer. Residues 125–137 (KIVPREQYMAAMT) lie on the Periplasmic side of the membrane. A helical membrane pass occupies residues 138–158 (FVTLPGQVGPLLGPALGGLLV). Over 159–164 (EYASWH) the chain is Cytoplasmic. A helical membrane pass occupies residues 165-185 (WIFLINIPVGIIGAIATLMLM). At 186 to 196 (PNYTMQTRRFD) the chain is on the periplasmic side. A helical transmembrane segment spans residues 197–217 (LSGFLLLAVGMAVLTLALDGS). The Cytoplasmic segment spans residues 218-224 (KGTGFSP). Residues 225-245 (LAIAGLVAVGVVALVLYLLHA) traverse the membrane as a helical segment. Residues 246 to 262 (QNNNRALFSLKLFRTRN) are Periplasmic-facing. A helical membrane pass occupies residues 263–283 (FSLGLAGSFAGRIGSGMLPFM). Topologically, residues 284-285 (TP) are cytoplasmic. Residues 286 to 306 (VFLQIGLGFSPFHAGLMMIPM) traverse the membrane as a helical segment. The Periplasmic portion of the chain corresponds to 307–341 (VLGSMGMKRIVVQVVNRFGYRRVLVATTLGLSLVT). The helical transmembrane segment at 342–362 (LLFMTTALLGWYYVLPFVLFL) threads the bilayer. Residues 363–395 (QGMVNSTRFSSMNTLTLKDLPDNLASSGNSLLS) are Cytoplasmic-facing. Residues 396 to 416 (MIMQLSMSIGVTIAGLLLGLF) form a helical membrane-spanning segment. Topologically, residues 417–430 (GSQHVSVDSGTTQT) are periplasmic. A helical membrane pass occupies residues 431-451 (VFMYTWLSMAFIIALPAFVFA). Residues 452–471 (RVPSDTHQNVAISRRKRSAQ) lie on the Cytoplasmic side of the membrane.

This sequence belongs to the major facilitator superfamily. TCR/Tet family.

It localises to the cell inner membrane. In Escherichia coli O1:K1 / APEC, this protein is Putative multidrug resistance protein MdtD.